Consider the following 83-residue polypeptide: U20-theraphotoxin-Cg1a 2 (83 aa).

The first 21 residues, methionine 1 to alanine 21, serve as a signal peptide directing secretion. The propeptide occupies alanine 22–arginine 47. Cystine bridges form between cysteine 49-cysteine 63, cysteine 56-cysteine 68, and cysteine 62-cysteine 76.

It belongs to the neurotoxin 10 (Hwtx-1) family. 40 (Jztx-35) subfamily. In terms of tissue distribution, expressed by the venom gland.

It is found in the secreted. Functionally, probable ion channel inhibitor. The sequence is that of U20-theraphotoxin-Cg1a 2 from Chilobrachys guangxiensis (Chinese earth tiger tarantula).